The following is an 838-amino-acid chain: Xyloglucanase (838 aa).

An N-terminal signal peptide occupies residues M1–A19. D53 acts as the Nucleophile in catalysis. 2 N-linked (GlcNAc...) asparagine glycosylation sites follow: N232 and N436. The active-site Proton donor is the D469. A disordered region spans residues G750–S801. Low complexity predominate over residues T754 to G797. The 37-residue stretch at G802–V838 folds into the CBM1 domain.

Belongs to the glycosyl hydrolase 74 family.

The enzyme catalyses Hydrolysis of (1-&gt;4)-D-glucosidic linkages in xyloglucans so as to successively remove oligosaccharides from the newly-formed chain end after endo-initiation on a polymer molecule.. Functionally, hydrolyzes the glucosidic bonds of unbranched Glc residues in tamarind seed xyloglucan, producing XXXG, XLXG, XXLG and XLLG. Has a low activity against beta-glucan and carboxymethylcellulose. Not active against Avicel, laminarin, xylan, galactomannan, linear and branched arabinans, galactan, polygalacturonic acid, starch, beta-D-Glcp, beta-D-cellobiose, beta-D-Galp, beta-D-Xylp, alpha-D-Xylp, alpha-L-Araf and alpha-L-Arap. The sequence is that of Xyloglucanase from Hypocrea jecorina (strain QM6a) (Trichoderma reesei).